Here is a 263-residue protein sequence, read N- to C-terminus: 4-hydroxy-tetrahydrodipicolinate reductase (263 aa).

Residues 7 to 12 (GASGRM) and D33 contribute to the NAD(+) site. Residue R34 participates in NADP(+) binding. NAD(+) is bound by residues 96 to 98 (GTT) and 120 to 123 (APNM). The Proton donor/acceptor role is filled by H153. (S)-2,3,4,5-tetrahydrodipicolinate is bound at residue H154. Catalysis depends on K157, which acts as the Proton donor. (S)-2,3,4,5-tetrahydrodipicolinate is bound at residue 163 to 164 (GT).

It belongs to the DapB family.

It is found in the cytoplasm. It carries out the reaction (S)-2,3,4,5-tetrahydrodipicolinate + NAD(+) + H2O = (2S,4S)-4-hydroxy-2,3,4,5-tetrahydrodipicolinate + NADH + H(+). The catalysed reaction is (S)-2,3,4,5-tetrahydrodipicolinate + NADP(+) + H2O = (2S,4S)-4-hydroxy-2,3,4,5-tetrahydrodipicolinate + NADPH + H(+). It participates in amino-acid biosynthesis; L-lysine biosynthesis via DAP pathway; (S)-tetrahydrodipicolinate from L-aspartate: step 4/4. Catalyzes the conversion of 4-hydroxy-tetrahydrodipicolinate (HTPA) to tetrahydrodipicolinate. The chain is 4-hydroxy-tetrahydrodipicolinate reductase from Ralstonia nicotianae (strain ATCC BAA-1114 / GMI1000) (Ralstonia solanacearum).